The chain runs to 284 residues: Probable endonuclease 4 (284 aa).

Positions 69, 109, 145, 179, 182, 216, 229, 231, and 261 each coordinate Zn(2+).

Belongs to the AP endonuclease 2 family. It depends on Zn(2+) as a cofactor.

It catalyses the reaction Endonucleolytic cleavage to 5'-phosphooligonucleotide end-products.. In terms of biological role, endonuclease IV plays a role in DNA repair. It cleaves phosphodiester bonds at apurinic or apyrimidinic (AP) sites, generating a 3'-hydroxyl group and a 5'-terminal sugar phosphate. The polypeptide is Probable endonuclease 4 (Klebsiella pneumoniae subsp. pneumoniae (strain ATCC 700721 / MGH 78578)).